A 108-amino-acid chain; its full sequence is Glutaredoxin (108 aa).

Residues 3-103 (LAKAKEIVSG…PLLTEAGAIA (101 aa)) form the Glutaredoxin domain. Residues Cys23 and Cys26 are joined by a disulfide bond.

Belongs to the glutaredoxin family. CPYC subfamily.

It localises to the cytoplasm. Its function is as follows. Has a glutathione-disulfide oxidoreductase activity in the presence of NADPH and glutathione reductase. Reduces low molecular weight disulfides and proteins. The chain is Glutaredoxin from Solanum lycopersicum (Tomato).